The chain runs to 196 residues: Small ribosomal subunit protein uS4c (196 aa).

The interval 17 to 36 (ALPGLTRKTPKSGSNLKKKF) is disordered. In terms of domain architecture, S4 RNA-binding spans 89–169 (MRLDNILFRL…LPKHLTIDTL (81 aa)).

This sequence belongs to the universal ribosomal protein uS4 family. Part of the 30S ribosomal subunit. Contacts protein S5. The interaction surface between S4 and S5 is involved in control of translational fidelity.

The protein resides in the plastid. It is found in the chloroplast. In terms of biological role, one of the primary rRNA binding proteins, it binds directly to 16S rRNA where it nucleates assembly of the body of the 30S subunit. Functionally, with S5 and S12 plays an important role in translational accuracy. The protein is Small ribosomal subunit protein uS4c (rps4) of Festuca gigantea (Giant fescue).